Here is a 334-residue protein sequence, read N- to C-terminus: Homoserine O-acetyltransferase (334 aa).

The AB hydrolase-1 domain occupies leucine 61–leucine 318. The active-site Nucleophile is the serine 148. A substrate-binding site is contributed by arginine 205. Catalysis depends on residues aspartate 285 and histidine 314. Aspartate 315 is a binding site for substrate.

It belongs to the AB hydrolase superfamily. MetX family. Homodimer.

It localises to the cytoplasm. The enzyme catalyses L-homoserine + acetyl-CoA = O-acetyl-L-homoserine + CoA. It functions in the pathway amino-acid biosynthesis; L-methionine biosynthesis via de novo pathway; O-acetyl-L-homoserine from L-homoserine: step 1/1. Its function is as follows. Transfers an acetyl group from acetyl-CoA to L-homoserine, forming acetyl-L-homoserine. The polypeptide is Homoserine O-acetyltransferase (Deinococcus radiodurans (strain ATCC 13939 / DSM 20539 / JCM 16871 / CCUG 27074 / LMG 4051 / NBRC 15346 / NCIMB 9279 / VKM B-1422 / R1)).